Here is a 200-residue protein sequence, read N- to C-terminus: Recombination protein RecR (200 aa).

The segment at 59–74 (CSTCGNIDSQNPCTVC) adopts a C4-type zinc-finger fold. Positions 82–177 (SIIVVVADVA…KVTRLAHGVP (96 aa)) constitute a Toprim domain.

The protein belongs to the RecR family.

Functionally, may play a role in DNA repair. It seems to be involved in an RecBC-independent recombinational process of DNA repair. It may act with RecF and RecO. This chain is Recombination protein RecR, found in Rhodopseudomonas palustris (strain ATCC BAA-98 / CGA009).